Consider the following 58-residue polypeptide: Keratin-associated protein 19-9b (58 aa).

The 12 X 2 AA repeats of G-[YCGS] stretch occupies residues glycine 6–tyrosine 52.

This sequence belongs to the KRTAP type 19 family. In terms of assembly, interacts with hair keratins.

Its function is as follows. In the hair cortex, hair keratin intermediate filaments are embedded in an interfilamentous matrix, consisting of hair keratin-associated proteins (KRTAP), which are essential for the formation of a rigid and resistant hair shaft through their extensive disulfide bond cross-linking with abundant cysteine residues of hair keratins. The matrix proteins include the high-sulfur and high-glycine-tyrosine keratins. The protein is Keratin-associated protein 19-9b (Krtap19-9b) of Mus musculus (Mouse).